The chain runs to 669 residues: DNA ligase (669 aa).

NAD(+)-binding positions include 35–39 (DSEYD), 84–85 (SL), and E114. The active-site N6-AMP-lysine intermediate is K116. Positions 137, 171, 287, and 311 each coordinate NAD(+). Positions 405, 408, 423, and 428 each coordinate Zn(2+). Residues 591-669 (DSDSYFAGKT…EAQLLGELKK (79 aa)) form the BRCT domain.

This sequence belongs to the NAD-dependent DNA ligase family. LigA subfamily. The cofactor is Mg(2+). Requires Mn(2+) as cofactor.

It catalyses the reaction NAD(+) + (deoxyribonucleotide)n-3'-hydroxyl + 5'-phospho-(deoxyribonucleotide)m = (deoxyribonucleotide)n+m + AMP + beta-nicotinamide D-nucleotide.. Functionally, DNA ligase that catalyzes the formation of phosphodiester linkages between 5'-phosphoryl and 3'-hydroxyl groups in double-stranded DNA using NAD as a coenzyme and as the energy source for the reaction. It is essential for DNA replication and repair of damaged DNA. The sequence is that of DNA ligase from Bacillus velezensis (strain DSM 23117 / BGSC 10A6 / LMG 26770 / FZB42) (Bacillus amyloliquefaciens subsp. plantarum).